Consider the following 121-residue polypeptide: Small ribosomal subunit protein uS11 (121 aa).

It belongs to the universal ribosomal protein uS11 family. As to quaternary structure, part of the 30S ribosomal subunit. Interacts with proteins S7 and S18. Binds to IF-3.

Functionally, located on the platform of the 30S subunit, it bridges several disparate RNA helices of the 16S rRNA. Forms part of the Shine-Dalgarno cleft in the 70S ribosome. This Mycoplasma genitalium (strain ATCC 33530 / DSM 19775 / NCTC 10195 / G37) (Mycoplasmoides genitalium) protein is Small ribosomal subunit protein uS11.